Here is a 489-residue protein sequence, read N- to C-terminus: Transcription factor TGAL11 (489 aa).

Over residues 87 to 99 the composition is skewed to low complexity; the sequence is AATATATARPPAT. The interval 87–181 is disordered; sequence AATATATARP…SDHRMTKTLD (95 aa). A compositionally biased stretch (polar residues) spans 121–139; the sequence is SNVTADTTDSESSSKNNGD. A compositionally biased stretch (low complexity) spans 148–159; it reads ASQFDQIPQQQQ. Basic and acidic residues predominate over residues 171 to 181; sequence HSDHRMTKTLD. Positions 181-225 constitute a bZIP domain; it reads DPKIMRRLAQNREAARKSRLRKKAYIQQLESSKLRLAQMEQDLER. The segment at 183–203 is basic motif; the sequence is KIMRRLAQNREAARKSRLRKK. The segment at 209–223 is leucine-zipper; sequence LESSKLRLAQMEQDL. In terms of domain architecture, DOG1 spans 245–460; sequence AAMFDAEYGR…RALSSLWASR (216 aa).

The protein belongs to the bZIP family.

The protein resides in the nucleus. In terms of biological role, transcriptional regulator involved in defense response. This is Transcription factor TGAL11 from Oryza sativa subsp. japonica (Rice).